Reading from the N-terminus, the 376-residue chain is Transcription initiation factor IIA subunit 1 (376 aa).

Alanine 2 bears the N-acetylalanine mark. Low complexity-rich tracts occupy residues 69-79 and 89-105; these read QVQQQHQPQQQ and QAQP…TQQV. Disordered stretches follow at residues 69–107, 246–265, and 274–329; these read QVQQ…QVLI, AQAQ…PAQT, and DGTG…QELF. 4 positions are modified to phosphoserine; by TAF1: serine 280, serine 281, serine 316, and serine 321. A compositionally biased stretch (acidic residues) spans 280–329; sequence SSEEDEDEEEDYDDDEEEDKEKDGAEDGQVEEEPLNSEDDVSDEEGQELF. DNA-binding residues include histidine 343 and arginine 344.

Belongs to the TFIIA subunit 1 family. TFIIA is a heterodimer of the large unprocessed subunit 1 and a small subunit gamma. It was originally believed to be a heterotrimer of an alpha (p35), a beta (p19) and a gamma subunit (p12). TFIIA forms a complex with TBP. Part of TBP-based Pol II pre-initiation complex (PIC), in which Pol II core assembles with general transcription factors and other specific initiation factors including GTF2E1, GTF2E2, GTF2F1, GTF2F2, TCEA1, ERCC2, ERCC3, GTF2H2, GTF2H3, GTF2H4, GTF2H5, GTF2A1, GTF2A2, GTF2B and TBP; this large multi-subunit PIC complex mediates DNA unwinding and targets Pol II core to the transcription start site where the first phosphodiester bond forms. In terms of processing, the alpha and beta subunits are postranslationally produced from the precursor formby TASP1. The cleavage promotes proteasomal degradation.

It is found in the nucleus. In terms of biological role, TFIIA is a component of the transcription machinery of RNA polymerase II and plays an important role in transcriptional activation. TFIIA in a complex with TBP mediates transcriptional activity. In Pongo abelii (Sumatran orangutan), this protein is Transcription initiation factor IIA subunit 1 (GTF2A1).